The primary structure comprises 463 residues: Perilipin-5 (463 aa).

An interaction with LIPE region spans residues 1–108 (MSEEEAAQIP…KLEEKLPFLQ (108 aa)). Residues 1–173 (MSEEEAAQIP…HFLPMTEEEL (173 aa)) form an essential for lipid droplet targeting region. Phosphoserine is present on residues serine 2, serine 148, and serine 322. Residues 185 to 463 (VGSVEDQRRQ…KHTLMPELDF (279 aa)) are interaction with PNPLA2 and ABHD5. Residues 444-463 (QEPETPSCPVKHTLMPELDF) form a recruits mitochondria at the lipid droplet surface region.

The protein belongs to the perilipin family. In terms of assembly, homooligomer. Interacts with PNPLA2; prevents interaction of PNPLA2 with ABHD5. Interacts with ABHD5; targets ABHD5 to lipid droplets and promotes interaction of ABHD5 with PNPLA2. Interacts with LIPE. In terms of processing, phosphorylated by PKA. Phosphorylated on serine in skeletal muscle at rest or upon lipolytic stimulation. Expressed in skeletal muscle, liver, heart and kidney.

It localises to the lipid droplet. Its subcellular location is the cytoplasm. The protein localises to the mitochondrion. Lipid droplet-associated protein that maintains the balance between lipogenesis and lipolysis and also regulates fatty acid oxidation in oxidative tissues. Recruits mitochondria to the surface of lipid droplets and is involved in lipid droplet homeostasis by regulating both the storage of fatty acids in the form of triglycerides and the release of fatty acids for mitochondrial fatty acid oxidation. In lipid droplet triacylglycerol hydrolysis, plays a role as a scaffolding protein for three major key lipolytic players: ABHD5, PNPLA2 and LIPE. Reduces the triacylglycerol hydrolase activity of PNPLA2 by recruiting and sequestering PNPLA2 to lipid droplets. Phosphorylation by PKA enables lipolysis probably by promoting release of ABHD5 from the perilipin scaffold and by facilitating interaction of ABHD5 with PNPLA2. Also increases lipolysis through interaction with LIPE and upon PKA-mediated phosphorylation of LIPE. The sequence is that of Perilipin-5 (PLIN5) from Homo sapiens (Human).